The following is a 72-amino-acid chain: Translation initiation factor IF-1 (72 aa).

An S1-like domain is found at 1-72; sequence MAKEESIKMN…SKGRITYRAR (72 aa).

This sequence belongs to the IF-1 family. Component of the 30S ribosomal translation pre-initiation complex which assembles on the 30S ribosome in the order IF-2 and IF-3, IF-1 and N-formylmethionyl-tRNA(fMet); mRNA recruitment can occur at any time during PIC assembly.

The protein localises to the cytoplasm. One of the essential components for the initiation of protein synthesis. Stabilizes the binding of IF-2 and IF-3 on the 30S subunit to which N-formylmethionyl-tRNA(fMet) subsequently binds. Helps modulate mRNA selection, yielding the 30S pre-initiation complex (PIC). Upon addition of the 50S ribosomal subunit IF-1, IF-2 and IF-3 are released leaving the mature 70S translation initiation complex. This chain is Translation initiation factor IF-1, found in Alkalilimnicola ehrlichii (strain ATCC BAA-1101 / DSM 17681 / MLHE-1).